A 335-amino-acid chain; its full sequence is Glyceraldehyde-3-phosphate dehydrogenase (335 aa).

NAD(+) contacts are provided by residues 10-11 (RI), aspartate 31, arginine 75, and threonine 122. Residues 152-154 (SCT) and threonine 183 contribute to the D-glyceraldehyde 3-phosphate site. Cysteine 153 (nucleophile) is an active-site residue. Asparagine 184 contacts NAD(+). D-glyceraldehyde 3-phosphate is bound by residues arginine 198, 211 to 212 (TG), and arginine 234. Asparagine 318 contributes to the NAD(+) binding site.

Belongs to the glyceraldehyde-3-phosphate dehydrogenase family. Homotetramer.

It localises to the cytoplasm. It catalyses the reaction D-glyceraldehyde 3-phosphate + phosphate + NAD(+) = (2R)-3-phospho-glyceroyl phosphate + NADH + H(+). It functions in the pathway carbohydrate degradation; glycolysis; pyruvate from D-glyceraldehyde 3-phosphate: step 1/5. Functionally, catalyzes the oxidative phosphorylation of glyceraldehyde 3-phosphate (G3P) to 1,3-bisphosphoglycerate (BPG) using the cofactor NAD. The first reaction step involves the formation of a hemiacetal intermediate between G3P and a cysteine residue, and this hemiacetal intermediate is then oxidized to a thioester, with concomitant reduction of NAD to NADH. The reduced NADH is then exchanged with the second NAD, and the thioester is attacked by a nucleophilic inorganic phosphate to produce BPG. This is Glyceraldehyde-3-phosphate dehydrogenase (gap) from Borreliella burgdorferi (strain ATCC 35210 / DSM 4680 / CIP 102532 / B31) (Borrelia burgdorferi).